The following is a 1159-amino-acid chain: Ferroxidase HEPHL1 (1159 aa).

A signal peptide spans 1 to 24; the sequence is MPRKQPAGCIFLLTFLGLSGLVGT. Plastocyanin-like domains lie at 25–207, 218–366, 379–561, 571–719, 731–907, and 915–1092; these read VTRT…LLVC, TRND…VDNC, QRRY…LLVC, TQKG…VSSC, MIRT…LITC, and KGRR…VPSN. Over 25 to 1114 the chain is Extracellular; it reads VTRTYYIGIV…KNLGPTGAKA (1090 aa). Residues His127 and His129 each coordinate Cu cation. An N-linked (GlcNAc...) asparagine glycan is attached at Asn161. A disulfide bond links Cys181 and Cys207. Residues His187 and His189 each contribute to the Cu cation site. A glycan (N-linked (GlcNAc...) asparagine) is linked at Asn236. Cys285 and Cys366 are joined by a disulfide. Cu cation is bound by residues His304, Cys347, and His352. Asn407 is a glycosylation site (N-linked (GlcNAc...) asparagine). The cysteines at positions 535 and 561 are disulfide-linked. Residue Asn589 is glycosylated (N-linked (GlcNAc...) asparagine). Cysteines 638 and 719 form a disulfide. Residues His657, Cys700, His705, and Met710 each contribute to the Cu cation site. N-linked (GlcNAc...) asparagine glycosylation is present at Asn772. Cys881 and Cys907 are oxidised to a cystine. N-linked (GlcNAc...) asparagine glycosylation is present at Asn935. Residues His1003, His1006, His1008, His1048, Cys1049, His1050, His1054, and Met1059 each contribute to the Cu cation site. A helical membrane pass occupies residues 1115–1135; the sequence is ALVILFIIGLLLLITTVILSL. Residues 1136–1159 lie on the Cytoplasmic side of the membrane; sequence RLCSAMKQTDYQQVQSCALPTDAL.

This sequence belongs to the multicopper oxidase family. It depends on Cu cation as a cofactor.

It is found in the membrane. The enzyme catalyses 4 Fe(2+) + O2 + 4 H(+) = 4 Fe(3+) + 2 H2O. In terms of biological role, is a copper-binding glycoprotein with ferroxidase activity. It oxidizes Fe(2+) to Fe(3+) without releasing radical oxygen species. May be involved in the regulation of intracellular iron content. This is Ferroxidase HEPHL1 (HEPHL1) from Homo sapiens (Human).